A 302-amino-acid chain; its full sequence is Succinate--CoA ligase [ADP-forming] subunit alpha (302 aa).

Residues 17-20, Lys43, and 96-98 each bind CoA; these read TGST and ITE. Tyr159 is a substrate binding site. The Tele-phosphohistidine intermediate role is filled by His247.

It belongs to the succinate/malate CoA ligase alpha subunit family. Heterotetramer of two alpha and two beta subunits.

It catalyses the reaction succinate + ATP + CoA = succinyl-CoA + ADP + phosphate. The catalysed reaction is GTP + succinate + CoA = succinyl-CoA + GDP + phosphate. The protein operates within carbohydrate metabolism; tricarboxylic acid cycle; succinate from succinyl-CoA (ligase route): step 1/1. Its function is as follows. Succinyl-CoA synthetase functions in the citric acid cycle (TCA), coupling the hydrolysis of succinyl-CoA to the synthesis of either ATP or GTP and thus represents the only step of substrate-level phosphorylation in the TCA. The alpha subunit of the enzyme binds the substrates coenzyme A and phosphate, while succinate binding and nucleotide specificity is provided by the beta subunit. The polypeptide is Succinate--CoA ligase [ADP-forming] subunit alpha (Staphylococcus aureus (strain MRSA252)).